The primary structure comprises 128 residues: Disintegrin ocellatusin (128 aa).

An N-terminal signal peptide occupies residues 1-20 (MIPVLLVTICLAVFPFQGSS). Residues 21–65 (IILESGNINDYEIVYPKKVAVLPTGAMNSAHPCYDPVTCQPKEKE) constitute a propeptide that is removed on maturation. A Disintegrin domain is found at 26-112 (GNINDYEIVY…DCPRNPYKGE (87 aa)). 5 disulfide bridges follow: Cys-53/Cys-59, Cys-67/Cys-76, Cys-72/Cys-97, Cys-73/Cys-102, and Cys-85/Cys-104. The short motif at 89 to 91 (RGD) is the Cell attachment site element. The propeptide occupies 116-128 (MEWPAPAKGSVLM).

In terms of assembly, monomer. In terms of tissue distribution, expressed by the venom gland.

The protein resides in the secreted. The disintegrin ocellatusin-10c1 is a poor inhibitor of platelet aggregation. The disintegrin inhibits the adhesion of cells expressing the RGD-dependent integrin alpha-5/beta-1 (ITGA5/ITGB1) to immobilized fibronectin. Inhibition on alpha-2b/beta-3 (ITGA2B/ITGB3) is low, and there is no inhibition on alpha-1/beta-1 (ITGA1/ITGB1), alpha-2/beta-1 (ITGA2/ITGB1) and alpha-6/beta-1 (ITGA6/ITGB1). In terms of biological role, the short monomeric disintegrin ocellatusin inhibits ADP-induced platelet aggregation (IC(50)=168 nM). Inhibits alpha-5/beta-1 (ITGA5/ITGB1) integrin and induces the expression of a ligand-induced binding site epitope on beta-1 integrin subunit. Has a direct chemotactic stimulus on human neutrophils in vitro. The chain is Disintegrin ocellatusin from Echis ocellatus (Ocellated saw-scaled viper).